Consider the following 210-residue polypeptide: Na(+)-translocating NADH-quinone reductase subunit D (210 aa).

6 consecutive transmembrane segments (helical) span residues 9–29 (AVLF…LGIC), 42–62 (LIMS…ISTI), 72–92 (IIVQ…VLQA), 96–116 (ATAK…IVMG), 131–151 (FLDG…VGFI), and 178–198 (MGLL…IWVL).

Belongs to the NqrDE/RnfAE family. Composed of six subunits; NqrA, NqrB, NqrC, NqrD, NqrE and NqrF.

It localises to the cell inner membrane. The enzyme catalyses a ubiquinone + n Na(+)(in) + NADH + H(+) = a ubiquinol + n Na(+)(out) + NAD(+). Functionally, NQR complex catalyzes the reduction of ubiquinone-1 to ubiquinol by two successive reactions, coupled with the transport of Na(+) ions from the cytoplasm to the periplasm. NqrA to NqrE are probably involved in the second step, the conversion of ubisemiquinone to ubiquinol. This is Na(+)-translocating NADH-quinone reductase subunit D from Pseudoalteromonas translucida (strain TAC 125).